The chain runs to 284 residues: NADPH-dependent 7-cyano-7-deazaguanine reductase (284 aa).

Substrate is bound at residue 91 to 93; that stretch reads IES. NADPH is bound at residue 93 to 94; that stretch reads SK. The active-site Thioimide intermediate is the C192. The active-site Proton donor is D199. A substrate-binding site is contributed by 231 to 232; it reads HE. 260–261 is an NADPH binding site; the sequence is RG.

Belongs to the GTP cyclohydrolase I family. QueF type 2 subfamily. As to quaternary structure, homodimer.

The protein resides in the cytoplasm. It carries out the reaction 7-aminomethyl-7-carbaguanine + 2 NADP(+) = 7-cyano-7-deazaguanine + 2 NADPH + 3 H(+). Its pathway is tRNA modification; tRNA-queuosine biosynthesis. Catalyzes the NADPH-dependent reduction of 7-cyano-7-deazaguanine (preQ0) to 7-aminomethyl-7-deazaguanine (preQ1). The polypeptide is NADPH-dependent 7-cyano-7-deazaguanine reductase (Shewanella denitrificans (strain OS217 / ATCC BAA-1090 / DSM 15013)).